Consider the following 221-residue polypeptide: Transcription repressor OFP8 (221 aa).

Acidic residues predominate over residues 124–138 (EDEGDKEESEDDDSD). The disordered stretch occupies residues 124–147 (EDEGDKEESEDDDSDTLFSSRSFS). The 60-residue stretch at 158-217 (VVKKSKDPYEDFRTSMVEMIVERQIFAPAELQQLLQCFLSLNSRQHHKVIVQVFLEIYAT) folds into the OVATE domain.

As to expression, expressed in roots, rosette and cauline leaves, shoots, stems, flower buds and siliques.

It localises to the nucleus. Transcriptional repressor that regulates multiple aspects of plant growth and development through the regulation of BEL1-LIKE (BLH) and KNOX TALE (KNAT) homeodomain transcription factors. The protein is Transcription repressor OFP8 (OFP8) of Arabidopsis thaliana (Mouse-ear cress).